A 295-amino-acid polypeptide reads, in one-letter code: Putative fused nickel transport protein NikMN (295 aa).

Helical transmembrane passes span 8–28 (LDLS…GYSI), 39–59 (LFGI…PIPG), 70–90 (LAGI…VLTI), 98–118 (GGIT…VFVG), 135–155 (FIAG…EIGI), 175–195 (ALLG…IAAA), 211–231 (LAVI…AELV), and 268–288 (AGTL…GFAL).

It belongs to the CbiM family. NikM subfamily.

It is found in the cell membrane. Its function is as follows. May be involved in nickel transport. The polypeptide is Putative fused nickel transport protein NikMN (Archaeoglobus fulgidus (strain ATCC 49558 / DSM 4304 / JCM 9628 / NBRC 100126 / VC-16)).